Consider the following 708-residue polypeptide: tRNA 5-methylaminomethyl-2-thiouridine biosynthesis bifunctional protein MnmC (708 aa).

Residues M1–A278 are tRNA (mnm(5)s(2)U34)-methyltransferase. Residues I301–L708 are FAD-dependent cmnm(5)s(2)U34 oxidoreductase.

It in the N-terminal section; belongs to the methyltransferase superfamily. tRNA (mnm(5)s(2)U34)-methyltransferase family. The protein in the C-terminal section; belongs to the DAO family. Requires FAD as cofactor.

The protein resides in the cytoplasm. It carries out the reaction 5-aminomethyl-2-thiouridine(34) in tRNA + S-adenosyl-L-methionine = 5-methylaminomethyl-2-thiouridine(34) in tRNA + S-adenosyl-L-homocysteine + H(+). Its function is as follows. Catalyzes the last two steps in the biosynthesis of 5-methylaminomethyl-2-thiouridine (mnm(5)s(2)U) at the wobble position (U34) in tRNA. Catalyzes the FAD-dependent demodification of cmnm(5)s(2)U34 to nm(5)s(2)U34, followed by the transfer of a methyl group from S-adenosyl-L-methionine to nm(5)s(2)U34, to form mnm(5)s(2)U34. This Shewanella baltica (strain OS195) protein is tRNA 5-methylaminomethyl-2-thiouridine biosynthesis bifunctional protein MnmC.